Here is a 274-residue protein sequence, read N- to C-terminus: uncharacterized protein (274 aa).

Residues 1–17 (MTQLTNFSESFSNQNSN) show a composition bias toward low complexity. Disordered stretches follow at residues 1–38 (MTQLTNFSESFSNQNSNLHQPYNFNSHQPPEENHYYVR) and 222–274 (ELGT…MEFE). The segment covering 18–28 (LHQPYNFNSHQ) has biased composition (polar residues). Basic and acidic residues predominate over residues 29–38 (PPEENHYYVR). Composition is skewed to polar residues over residues 239–249 (PMASPTGSSQI) and 256–265 (SPNSLTNGSV).

This is an uncharacterized protein from Caenorhabditis elegans.